The sequence spans 129 residues: Large ribosomal subunit protein bL19 (129 aa).

The protein belongs to the bacterial ribosomal protein bL19 family.

Functionally, this protein is located at the 30S-50S ribosomal subunit interface and may play a role in the structure and function of the aminoacyl-tRNA binding site. In Rhizorhabdus wittichii (strain DSM 6014 / CCUG 31198 / JCM 15750 / NBRC 105917 / EY 4224 / RW1) (Sphingomonas wittichii), this protein is Large ribosomal subunit protein bL19.